We begin with the raw amino-acid sequence, 332 residues long: Monoterpene synthase 25 (332 aa).

The Mg(2+) site is built by D115, E180, N240, S244, and E248. Positions 115-121 (DDPVVFD) match the DDXXXXD motif motif. Residues 240-248 (NDILSFYKE) carry the NSE/DTE motif motif.

Belongs to the trichodiene synthase family. The cofactor is Mg(2+).

Functionally, terpene cyclase that catalyzes the cyclization of geranyl diphosphate (GPP) to myrcene and linalool. The polypeptide is Monoterpene synthase 25 (Postia placenta (strain ATCC 44394 / Madison 698-R) (Brown rot fungus)).